The primary structure comprises 353 residues: Ribosomal RNA small subunit methyltransferase H (353 aa).

S-adenosyl-L-methionine-binding positions include 50–52 (GGY), Asp-69, Phe-96, Asp-117, and Gln-124. The interval 276–353 (AAQASRHVPG…PAPQGRGPRR (78 aa)) is disordered.

Belongs to the methyltransferase superfamily. RsmH family.

It localises to the cytoplasm. It catalyses the reaction cytidine(1402) in 16S rRNA + S-adenosyl-L-methionine = N(4)-methylcytidine(1402) in 16S rRNA + S-adenosyl-L-homocysteine + H(+). In terms of biological role, specifically methylates the N4 position of cytidine in position 1402 (C1402) of 16S rRNA. The protein is Ribosomal RNA small subunit methyltransferase H of Methylorubrum extorquens (strain CM4 / NCIMB 13688) (Methylobacterium extorquens).